Consider the following 489-residue polypeptide: UDP-N-acetylmuramoyl-L-alanyl-D-glutamate--2,6-diaminopimelate ligase (489 aa).

S30 lines the UDP-N-acetyl-alpha-D-muramoyl-L-alanyl-D-glutamate pocket. G108–T114 is a binding site for ATP. Residues N149, T150–T151, S177, Q183, and R185 contribute to the UDP-N-acetyl-alpha-D-muramoyl-L-alanyl-D-glutamate site. An N6-carboxylysine modification is found at K217. Residues R383, D407–R410, G459, and E463 each bind meso-2,6-diaminopimelate. The Meso-diaminopimelate recognition motif signature appears at D407 to R410.

Belongs to the MurCDEF family. MurE subfamily. It depends on Mg(2+) as a cofactor. Carboxylation is probably crucial for Mg(2+) binding and, consequently, for the gamma-phosphate positioning of ATP.

It localises to the cytoplasm. It carries out the reaction UDP-N-acetyl-alpha-D-muramoyl-L-alanyl-D-glutamate + meso-2,6-diaminopimelate + ATP = UDP-N-acetyl-alpha-D-muramoyl-L-alanyl-gamma-D-glutamyl-meso-2,6-diaminopimelate + ADP + phosphate + H(+). The protein operates within cell wall biogenesis; peptidoglycan biosynthesis. Its function is as follows. Catalyzes the addition of meso-diaminopimelic acid to the nucleotide precursor UDP-N-acetylmuramoyl-L-alanyl-D-glutamate (UMAG) in the biosynthesis of bacterial cell-wall peptidoglycan. The chain is UDP-N-acetylmuramoyl-L-alanyl-D-glutamate--2,6-diaminopimelate ligase from Geobacillus kaustophilus (strain HTA426).